We begin with the raw amino-acid sequence, 201 residues long: Recombination protein RecR (201 aa).

Residues 60-75 (CSTCGNVDTADPCMIC) form a C4-type zinc finger. The Toprim domain maps to 83 to 178 (GTIIVVEDVS…KVTRLAHGVP (96 aa)).

It belongs to the RecR family.

In terms of biological role, may play a role in DNA repair. It seems to be involved in an RecBC-independent recombinational process of DNA repair. It may act with RecF and RecO. The chain is Recombination protein RecR from Mesorhizobium japonicum (strain LMG 29417 / CECT 9101 / MAFF 303099) (Mesorhizobium loti (strain MAFF 303099)).